Here is a 424-residue protein sequence, read N- to C-terminus: Bone morphogenetic protein 10 (424 aa).

An N-terminal signal peptide occupies residues 1–21 (MGSLVLTLCALFCLAAYLVSG). Positions 22–316 (SPIMNLEQSP…IYDSTARIRR (295 aa)) are excised as a propeptide. Asparagine 67 and asparagine 131 each carry an N-linked (GlcNAc...) asparagine glycan. 3 cysteine pairs are disulfide-bonded: cysteine 323–cysteine 389, cysteine 352–cysteine 421, and cysteine 356–cysteine 423.

This sequence belongs to the TGF-beta family. Homodimer; disulfide-linked. Interacts with FBN1 (via N-terminal domain) and FBN2. Interacts with ENG. Detected in mammary epithelia (at protein level).

The protein resides in the secreted. Functionally, required for maintaining the proliferative activity of embryonic cardiomyocytes by preventing premature activation of the negative cell cycle regulator CDKN1C/p57KIP and maintaining the required expression levels of cardiogenic factors such as MEF2C and NKX2-5. Acts as a ligand for ACVRL1/ALK1, BMPR1A/ALK3 and BMPR1B/ALK6, leading to activation of SMAD1, SMAD5 and SMAD8 transcription factors. Inhibits endothelial cell migration and growth. May reduce cell migration and cell matrix adhesion in breast cancer cell lines. This chain is Bone morphogenetic protein 10 (BMP10), found in Homo sapiens (Human).